The sequence spans 366 residues: ATPase ASNA1 homolog (366 aa).

Position 33–40 (33–40 (KGGVGKTT)) interacts with ATP. D62 is a catalytic residue. ATP-binding residues include E234 and N261.

The protein belongs to the arsA ATPase family. As to quaternary structure, homodimer.

It is found in the cytoplasm. Its subcellular location is the endoplasmic reticulum. Functionally, ATPase required for the post-translational delivery of tail-anchored (TA) proteins to the endoplasmic reticulum. Recognizes and selectively binds the transmembrane domain of TA proteins in the cytosol. This complex then targets to the endoplasmic reticulum by membrane-bound receptors, where the tail-anchored protein is released for insertion. This process is regulated by ATP binding and hydrolysis. ATP binding drives the homodimer towards the closed dimer state, facilitating recognition of newly synthesized TA membrane proteins. ATP hydrolysis is required for insertion. Subsequently, the homodimer reverts towards the open dimer state, lowering its affinity for the membrane-bound receptor, and returning it to the cytosol to initiate a new round of targeting. The chain is ATPase ASNA1 homolog from Cryptosporidium parvum (strain Iowa II).